The sequence spans 125 residues: Large ribosomal subunit protein bL12 (125 aa).

The protein belongs to the bacterial ribosomal protein bL12 family. In terms of assembly, homodimer. Part of the ribosomal stalk of the 50S ribosomal subunit. Forms a multimeric L10(L12)X complex, where L10 forms an elongated spine to which 2 to 4 L12 dimers bind in a sequential fashion. Binds GTP-bound translation factors.

In terms of biological role, forms part of the ribosomal stalk which helps the ribosome interact with GTP-bound translation factors. Is thus essential for accurate translation. The protein is Large ribosomal subunit protein bL12 of Cereibacter sphaeroides (strain ATCC 17023 / DSM 158 / JCM 6121 / CCUG 31486 / LMG 2827 / NBRC 12203 / NCIMB 8253 / ATH 2.4.1.) (Rhodobacter sphaeroides).